Here is a 253-residue protein sequence, read N- to C-terminus: Hydroxyacylglutathione hydrolase (253 aa).

Zn(2+) is bound by residues His54, His56, Asp58, His59, His112, Asp131, and His169.

This sequence belongs to the metallo-beta-lactamase superfamily. Glyoxalase II family. In terms of assembly, monomer. The cofactor is Zn(2+).

It carries out the reaction an S-(2-hydroxyacyl)glutathione + H2O = a 2-hydroxy carboxylate + glutathione + H(+). It participates in secondary metabolite metabolism; methylglyoxal degradation; (R)-lactate from methylglyoxal: step 2/2. Thiolesterase that catalyzes the hydrolysis of S-D-lactoyl-glutathione to form glutathione and D-lactic acid. This Bartonella tribocorum (strain CIP 105476 / IBS 506) protein is Hydroxyacylglutathione hydrolase.